The primary structure comprises 547 residues: Glucose-6-phosphate isomerase (547 aa).

Catalysis depends on glutamate 352, which acts as the Proton donor. Catalysis depends on residues histidine 383 and lysine 511.

Belongs to the GPI family.

It is found in the cytoplasm. The enzyme catalyses alpha-D-glucose 6-phosphate = beta-D-fructose 6-phosphate. Its pathway is carbohydrate biosynthesis; gluconeogenesis. It functions in the pathway carbohydrate degradation; glycolysis; D-glyceraldehyde 3-phosphate and glycerone phosphate from D-glucose: step 2/4. Its function is as follows. Catalyzes the reversible isomerization of glucose-6-phosphate to fructose-6-phosphate. This is Glucose-6-phosphate isomerase from Magnetococcus marinus (strain ATCC BAA-1437 / JCM 17883 / MC-1).